Consider the following 660-residue polypeptide: DNA mismatch repair protein MutL (660 aa).

It belongs to the DNA mismatch repair MutL/HexB family.

Functionally, this protein is involved in the repair of mismatches in DNA. It is required for dam-dependent methyl-directed DNA mismatch repair. May act as a 'molecular matchmaker', a protein that promotes the formation of a stable complex between two or more DNA-binding proteins in an ATP-dependent manner without itself being part of a final effector complex. The chain is DNA mismatch repair protein MutL from Streptococcus equi subsp. zooepidemicus (strain MGCS10565).